A 245-amino-acid chain; its full sequence is Protein-L-isoaspartate O-methyltransferase 1 (245 aa).

Serine 76 is a catalytic residue.

Belongs to the methyltransferase superfamily. L-isoaspartyl/D-aspartyl protein methyltransferase family.

The protein resides in the cytoplasm. The enzyme catalyses [protein]-L-isoaspartate + S-adenosyl-L-methionine = [protein]-L-isoaspartate alpha-methyl ester + S-adenosyl-L-homocysteine. In terms of biological role, catalyzes the methyl esterification of L-isoaspartyl residues in peptides and proteins that result from spontaneous decomposition of normal L-aspartyl and L-asparaginyl residues. It plays a role in the repair and/or degradation of damaged proteins. This is Protein-L-isoaspartate O-methyltransferase 1 from Rhodopseudomonas palustris (strain HaA2).